Here is a 74-residue protein sequence, read N- to C-terminus: Sec-independent protein translocase protein TatA (74 aa).

A helical transmembrane segment spans residues 1–21; that stretch reads MGGISIWQLLIIVAIVVLLFG. The disordered stretch occupies residues 45-74; that stretch reads EEPKDAEFKSLDKAENTAQTKKEEKEKEQA.

It belongs to the TatA/E family. In terms of assembly, the Tat system comprises two distinct complexes: a TatABC complex, containing multiple copies of TatA, TatB and TatC subunits, and a separate TatA complex, containing only TatA subunits. Substrates initially bind to the TatABC complex, which probably triggers association of the separate TatA complex to form the active translocon.

The protein localises to the cell inner membrane. In terms of biological role, part of the twin-arginine translocation (Tat) system that transports large folded proteins containing a characteristic twin-arginine motif in their signal peptide across membranes. TatA could form the protein-conducting channel of the Tat system. This Actinobacillus succinogenes (strain ATCC 55618 / DSM 22257 / CCUG 43843 / 130Z) protein is Sec-independent protein translocase protein TatA.